The sequence spans 632 residues: Acyl-coenzyme A oxidase-like protein (632 aa).

376-381 (TGGMGY) provides a ligand contact to FAD.

The protein belongs to the acyl-CoA oxidase family. It depends on FAD as a cofactor.

The chain is Acyl-coenzyme A oxidase-like protein (Acoxl) from Mus musculus (Mouse).